A 461-amino-acid chain; its full sequence is Serine/threonine-protein kinase ppk24, mitochondrial (461 aa).

Positions 120–416 constitute a Protein kinase domain; the sequence is FQHLKSIAKG…LDSILGTAWV (297 aa). Residues 126–134 and lysine 153 contribute to the ATP site; that span reads IAKGATSTI. The active-site Proton acceptor is aspartate 256.

It belongs to the protein kinase superfamily. Ser/Thr protein kinase family.

The protein localises to the mitochondrion. It catalyses the reaction L-seryl-[protein] + ATP = O-phospho-L-seryl-[protein] + ADP + H(+). It carries out the reaction L-threonyl-[protein] + ATP = O-phospho-L-threonyl-[protein] + ADP + H(+). Functionally, has a role late in meiosis. The polypeptide is Serine/threonine-protein kinase ppk24, mitochondrial (ppk24) (Schizosaccharomyces pombe (strain 972 / ATCC 24843) (Fission yeast)).